The primary structure comprises 414 residues: uncharacterized protein (414 aa).

Positions 1 to 16 (MRVILLLAFLISLTEC) are cleaved as a signal peptide. A Myb-like 1 domain is found at 20 to 59 (SEDLALYDLVEEVGVNFYEWFDIPRDASSNQVKKAYRKLT). The region spanning 35-99 (NFYEWFDIPR…ELREKYDNVL (65 aa)) is the J domain. The chain crosses the membrane as a helical span at residues 125–145 (ILVLLFIGTIAHYLMMWAAYF). The segment at 211–234 (MTPKEVEPEEPTEEELAQQRRQQR) is disordered. The span at 217–226 (EPEEPTEEEL) shows a compositional bias: acidic residues. The Myb-like 2 domain occupies 274–320 (AQKQSGATWTPDELASLVRLSTEKYPAGTPNRWEQMGRVLNRSAEDV). Residues 352–407 (KSEDDWSQAEQKAFETALQKYPKGTDERWERISEEIGSKTKKQVMVRFKQLAEMIR) form the SANT domain.

The protein localises to the nucleus membrane. This is an uncharacterized protein from Caenorhabditis elegans.